The chain runs to 217 residues: uncharacterized protein (217 aa).

2 disordered regions span residues 1-85 (MGVK…RGNT) and 167-189 (KLRSPPHKDQHNSATNKDQEPDE). Basic and acidic residues predominate over residues 38–48 (AKSDKDKRKGS). Over residues 60-78 (NALPTKNLTTPPALNPLTT) the composition is skewed to low complexity. The span at 172–189 (PHKDQHNSATNKDQEPDE) shows a compositional bias: basic and acidic residues.

This is an uncharacterized protein from Saccharomyces cerevisiae (strain ATCC 204508 / S288c) (Baker's yeast).